The primary structure comprises 582 residues: Putative phospholipase B-like 2 (582 aa).

A signal peptide spans Met1–Ala42. N-linked (GlcNAc...) asparagine glycans are attached at residues Asn91, Asn141, Asn178, Asn224, and Asn318. Cys139 and Cys146 form a disulfide bridge. Cys480 and Cys482 are joined by a disulfide. Asn502 is a glycosylation site (N-linked (GlcNAc...) asparagine).

It belongs to the phospholipase B-like family.

Its subcellular location is the secreted. Its function is as follows. Putative phospholipase. In Caenorhabditis elegans, this protein is Putative phospholipase B-like 2.